The chain runs to 337 residues: DNA-directed RNA polymerase subunit alpha (337 aa).

The alpha N-terminal domain (alpha-NTD) stretch occupies residues M1–E233. The tract at residues G266–F337 is alpha C-terminal domain (alpha-CTD).

It belongs to the RNA polymerase alpha chain family. In plastids the minimal PEP RNA polymerase catalytic core is composed of four subunits: alpha, beta, beta', and beta''. When a (nuclear-encoded) sigma factor is associated with the core the holoenzyme is formed, which can initiate transcription.

The protein localises to the plastid. It is found in the chloroplast. It catalyses the reaction RNA(n) + a ribonucleoside 5'-triphosphate = RNA(n+1) + diphosphate. Its function is as follows. DNA-dependent RNA polymerase catalyzes the transcription of DNA into RNA using the four ribonucleoside triphosphates as substrates. The protein is DNA-directed RNA polymerase subunit alpha of Ceratophyllum demersum (Rigid hornwort).